A 476-amino-acid polypeptide reads, in one-letter code: Lactate utilization protein B (476 aa).

4Fe-4S ferredoxin-type domains are found at residues 304–334 (GGEF…GHTY) and 353–382 (YDDF…LHQL). 7 residues coordinate [4Fe-4S] cluster: Cys313, Cys316, Cys319, Cys323, Cys366, Cys369, and Cys373. A disordered region spans residues 452–476 (RDFPAPNKNSFRNWMKHRTKGDEES).

Belongs to the LutB/YkgF family.

Is involved in L-lactate degradation and allows cells to grow with lactate as the sole carbon source. Has probably a role as an electron transporter during oxidation of L-lactate. This Lysinibacillus sphaericus (strain C3-41) protein is Lactate utilization protein B.